The chain runs to 1218 residues: Formin-A (1218 aa).

Positions 1 to 108 constitute a C2 domain; sequence MADKLYQIKL…ILGEACNYSV (108 aa). The GBD/FH3 domain maps to 139–539; it reads EEKKRHDEIQ…QISLRDKNIG (401 aa). The stretch at 563–638 forms a coiled coil; that stretch reads LKSQIESLKK…QLKLTQGTAK (76 aa). Residues 634 to 762 form a disordered region; sequence QGTAKPDSAA…KAAAPPRKEV (129 aa). The span at 649-747 shows a compositional bias: pro residues; the sequence is APPPPPPPMT…FGKGPPPPPG (99 aa). Residues 652 to 737 form the FH1 domain; it reads PPPPPMTGGG…AGGPPPPPPP (86 aa). Residues 759 to 1155 form the FH2 domain; it reads RKEVPVPALK…IAKREAAKKL (397 aa). A coiled-coil region spans residues 1034–1061; the sequence is SLSQVQAEVATLRKEFVQVQKSIETLNS. Disordered stretches follow at residues 1153–1179 and 1198–1218; these read KKLK…TVEV and KNRR…PIDL. The region spanning 1174 to 1209 is the DAD domain; it reads GETVEVKESVVDDLLDTIASGDAFKNRRRRARKTDQ.

Belongs to the formin homology family. Diaphanous subfamily. In terms of assembly, interacts (via GBD/FH3 domain) with activated Rho-GTPases.

In terms of biological role, formins play an important role in the nucleation of actin and the formation of linear actin filaments. The sequence is that of Formin-A (forA) from Dictyostelium discoideum (Social amoeba).